Reading from the N-terminus, the 429-residue chain is Histidine--tRNA ligase (429 aa).

It belongs to the class-II aminoacyl-tRNA synthetase family. As to quaternary structure, homodimer.

It is found in the cytoplasm. It carries out the reaction tRNA(His) + L-histidine + ATP = L-histidyl-tRNA(His) + AMP + diphosphate + H(+). This is Histidine--tRNA ligase from Pseudomonas aeruginosa (strain UCBPP-PA14).